Reading from the N-terminus, the 355-residue chain is MKVDPNKEKALAAVLIQIEKQFGKGSIMKLGEDRSMDVETISTGSLSLDVALGAGGLPMGRIVEIYGPESSGKTTLTLEVIAAAQREGKTCAFIDAEHALDPIYAKKLGVDIDNLLCSQPDTGEQALEICDALTRSGAVDVIVVDSVAALTPKAEIEGEIGDSHMGLAARMMSQAMRKLAGNLKQSNTLLIFINQIRMKIGVMFGNPETTTGGNALKFYASVRLDIRRTGAIKDGDEVVGNETRVKVVKNKVAAPFKQAEFQILYGQGINRTGELVDLGVAHKLIEKAGAWYSYKGDKIGQGRANAGKYLTENPAIATEIDKTLRELLLSNPSALAAKDDASTEDNVDLETGEVF.

Position 67-74 (67-74 (GPESSGKT)) interacts with ATP.

The protein belongs to the RecA family.

It is found in the cytoplasm. Its function is as follows. Can catalyze the hydrolysis of ATP in the presence of single-stranded DNA, the ATP-dependent uptake of single-stranded DNA by duplex DNA, and the ATP-dependent hybridization of homologous single-stranded DNAs. It interacts with LexA causing its activation and leading to its autocatalytic cleavage. This Shewanella baltica (strain OS195) protein is Protein RecA.